A 340-amino-acid chain; its full sequence is Fructose-1,6-bisphosphatase class 1 (340 aa).

Residues Glu107, Asp126, Leu128, and Asp129 each contribute to the Mg(2+) site. Position 215 (Asn215) interacts with substrate. Glu287 is a binding site for Mg(2+).

This sequence belongs to the FBPase class 1 family. Homotetramer. Mg(2+) is required as a cofactor.

It is found in the cytoplasm. The catalysed reaction is beta-D-fructose 1,6-bisphosphate + H2O = beta-D-fructose 6-phosphate + phosphate. It functions in the pathway carbohydrate biosynthesis; gluconeogenesis. This Brucella anthropi (strain ATCC 49188 / DSM 6882 / CCUG 24695 / JCM 21032 / LMG 3331 / NBRC 15819 / NCTC 12168 / Alc 37) (Ochrobactrum anthropi) protein is Fructose-1,6-bisphosphatase class 1.